We begin with the raw amino-acid sequence, 376 residues long: MSKTLTLAKKLVSIDSITPQDKGCQSIMISHLNDLNFEITDLKFGEVDNFWAIRGQQSPVFVFAGHTDVVPVGNESEWHMPPFSAQVKNGMLYGRGTSDMKGSLAAMLSATDRFVKDHSNHKGSIGYLITSDEEGPAINGTVKVAQYLKKINQTVDYCLVGEPSATHELGDIIKNGRRGSLNGSFKIIGKQGHIAYPHLASNPIHLVIPALNDLCNEVWDEGNEYFPATSFQISNIQSGTGVTNVIPGESNIVFNFRYSTQCTQEQLQSRVCAILDKRNFEYQITWEHSGYPFLTPKGKLVNACVNAIKTVKNINTQLSTSGGTSDGRFIAPILKTRVIELGPSNATIHQVNECVSIQDLEDLSDIYYHILKNILT.

A Zn(2+)-binding site is contributed by H66. D68 is an active-site residue. D99 contributes to the Zn(2+) binding site. Residue E133 is the Proton acceptor of the active site. 3 residues coordinate Zn(2+): E134, E162, and H349.

This sequence belongs to the peptidase M20A family. DapE subfamily. Homodimer. It depends on Zn(2+) as a cofactor. Co(2+) serves as cofactor.

It catalyses the reaction N-succinyl-(2S,6S)-2,6-diaminopimelate + H2O = (2S,6S)-2,6-diaminopimelate + succinate. It participates in amino-acid biosynthesis; L-lysine biosynthesis via DAP pathway; LL-2,6-diaminopimelate from (S)-tetrahydrodipicolinate (succinylase route): step 3/3. Its function is as follows. Catalyzes the hydrolysis of N-succinyl-L,L-diaminopimelic acid (SDAP), forming succinate and LL-2,6-diaminopimelate (DAP), an intermediate involved in the bacterial biosynthesis of lysine and meso-diaminopimelic acid, an essential component of bacterial cell walls. The protein is Succinyl-diaminopimelate desuccinylase of Vesicomyosocius okutanii subsp. Calyptogena okutanii (strain HA).